The sequence spans 162 residues: Lipoprotein signal peptidase (162 aa).

A run of 3 helical transmembrane segments spans residues 12-32 (WLWL…LILQ), 70-90 (WFFA…MYRS), and 102-122 (ALII…GFVV). Catalysis depends on residues Asp-123 and Asp-141. Residues 137–157 (FNLADSAICIGAALIVLEGFL) traverse the membrane as a helical segment.

It belongs to the peptidase A8 family.

The protein resides in the cell inner membrane. The catalysed reaction is Release of signal peptides from bacterial membrane prolipoproteins. Hydrolyzes -Xaa-Yaa-Zaa-|-(S,diacylglyceryl)Cys-, in which Xaa is hydrophobic (preferably Leu), and Yaa (Ala or Ser) and Zaa (Gly or Ala) have small, neutral side chains.. It functions in the pathway protein modification; lipoprotein biosynthesis (signal peptide cleavage). Its function is as follows. This protein specifically catalyzes the removal of signal peptides from prolipoproteins. The polypeptide is Lipoprotein signal peptidase (Citrobacter koseri (strain ATCC BAA-895 / CDC 4225-83 / SGSC4696)).